The chain runs to 367 residues: Succinyl-diaminopimelate desuccinylase (367 aa).

Residue histidine 67 participates in Zn(2+) binding. Residue aspartate 69 is part of the active site. Residue aspartate 98 coordinates Zn(2+). Glutamate 128 serves as the catalytic Proton acceptor. Zn(2+)-binding residues include glutamate 129, glutamate 157, and histidine 342.

It belongs to the peptidase M20A family. DapE subfamily. As to quaternary structure, homodimer. The cofactor is Zn(2+). Co(2+) is required as a cofactor.

The catalysed reaction is N-succinyl-(2S,6S)-2,6-diaminopimelate + H2O = (2S,6S)-2,6-diaminopimelate + succinate. The protein operates within amino-acid biosynthesis; L-lysine biosynthesis via DAP pathway; LL-2,6-diaminopimelate from (S)-tetrahydrodipicolinate (succinylase route): step 3/3. Its function is as follows. Catalyzes the hydrolysis of N-succinyl-L,L-diaminopimelic acid (SDAP), forming succinate and LL-2,6-diaminopimelate (DAP), an intermediate involved in the bacterial biosynthesis of lysine and meso-diaminopimelic acid, an essential component of bacterial cell walls. In Campylobacter hominis (strain ATCC BAA-381 / DSM 21671 / CCUG 45161 / LMG 19568 / NCTC 13146 / CH001A), this protein is Succinyl-diaminopimelate desuccinylase.